Consider the following 205-residue polypeptide: MKLDVIKLDGTKAGNIDLDEALFGLEPRADILHRVVRWQRNNAQAGTHKVLTKSEVSYSTKKIYRQKGTGGARHGSRKSPTFRHGGVYKGPTPRSHGHDLTKKFRKLGLRHALSAKAKAGELVVIENAEAEGKTAALAKQVANLGWKRALVIDGAAVNEGFARAARNIEGLDILPSMGANVYDILKRDTLVLTKAAVEALEARLK.

Residues 65 to 99 (RQKGTGGARHGSRKSPTFRHGGVYKGPTPRSHGHD) form a disordered region.

This sequence belongs to the universal ribosomal protein uL4 family. In terms of assembly, part of the 50S ribosomal subunit.

Functionally, one of the primary rRNA binding proteins, this protein initially binds near the 5'-end of the 23S rRNA. It is important during the early stages of 50S assembly. It makes multiple contacts with different domains of the 23S rRNA in the assembled 50S subunit and ribosome. Forms part of the polypeptide exit tunnel. In Ruegeria pomeroyi (strain ATCC 700808 / DSM 15171 / DSS-3) (Silicibacter pomeroyi), this protein is Large ribosomal subunit protein uL4.